The following is a 141-amino-acid chain: MAKKVEGYIKLQIPAGKATPAPPVGPALGQHGVNIVEFTKQFNAKTADQGDLIIPVVITVYADRSFSFITKTPPAPVLIKKACKIQSGSGEPNKKKVAKITKAQVQEIAELKMPDLNAASLESAMSMIAGTARSMGVEVTE.

Belongs to the universal ribosomal protein uL11 family. Part of the ribosomal stalk of the 50S ribosomal subunit. Interacts with L10 and the large rRNA to form the base of the stalk. L10 forms an elongated spine to which L12 dimers bind in a sequential fashion forming a multimeric L10(L12)X complex. Post-translationally, one or more lysine residues are methylated.

Functionally, forms part of the ribosomal stalk which helps the ribosome interact with GTP-bound translation factors. The sequence is that of Large ribosomal subunit protein uL11 from Agathobacter rectalis (strain ATCC 33656 / DSM 3377 / JCM 17463 / KCTC 5835 / VPI 0990) (Eubacterium rectale).